A 296-amino-acid polypeptide reads, in one-letter code: Ribosomal RNA small subunit methyltransferase H (296 aa).

Residues 30–32, Asp49, Phe77, Asp95, and Gln102 each bind S-adenosyl-L-methionine; that span reads GGH.

This sequence belongs to the methyltransferase superfamily. RsmH family.

It is found in the cytoplasm. The catalysed reaction is cytidine(1402) in 16S rRNA + S-adenosyl-L-methionine = N(4)-methylcytidine(1402) in 16S rRNA + S-adenosyl-L-homocysteine + H(+). In terms of biological role, specifically methylates the N4 position of cytidine in position 1402 (C1402) of 16S rRNA. This is Ribosomal RNA small subunit methyltransferase H from Hydrogenobaculum sp. (strain Y04AAS1).